Here is a 357-residue protein sequence, read N- to C-terminus: MDEQTGTFNPRVLWPDVIRLPQNRWIFTCKEIIDRLGTDVHKTAEMKKLMEKCLMYLYFMKKSLNLFDYTYVEASILFFRYWYYYGLSYNLLDSIHISQAILVTACKTMENNRPIDAYVKSTCEFVTIHKIPVGNAGPRPNMDKLKWEFRDRLVKNEKKLLCQFGFDFNDGVGNARELIEEIFSGFYRFNRDDILPDEFKKTAFPKILQESRMFIVQGMTQPVTLLCDGYKFVVMSLIYCGLEYKRLVDKNFRYPKNFFSRVLLPSLKFNTQELVETFMDYRILEDNFFDLKSNKGSKLHISEEMIRNITDEDNDFCHSNEELFDYEHIREGNVSKEFMEHIQSKVDAMYEKYKTKV.

As to quaternary structure, belongs to the BUR kinase complex.

It is found in the nucleus. Component of the BUR kinase complex involved in transcription regulation. This complex phosphorylates the UBC2/RAD6 ubiquitin-conjugating enzyme (E2), leading to monoubiquitination of histone H2B and the silencing of telomeric-associated genes. Also required for histone H3 methylation. Necessary for the recovery from pheromone-induced growth arrest in the cell cycle G1 phase. The kinase activity of the complex requires the presence of BUR2. Overexpression of BUR2 interferes with mitotic chromosome segregation. The chain is Protein BUR2 (BUR2) from Candida glabrata (strain ATCC 2001 / BCRC 20586 / JCM 3761 / NBRC 0622 / NRRL Y-65 / CBS 138) (Yeast).